A 469-amino-acid polypeptide reads, in one-letter code: Interstitial collagenase (469 aa).

An N-terminal signal peptide occupies residues 1–18 (MPRLPLLLLLLWGTGSHG). Residues 19–99 (FPAATSETQE…PRCGVPDVAP (81 aa)) constitute a propeptide, activation peptide. A Cysteine switch motif is present at residues 90-97 (PRCGVPDV). Residue Cys92 participates in Zn(2+) binding. Asn120 is a glycosylation site (N-linked (GlcNAc...) asparagine). Residues Asp124 and Asp158 each coordinate Ca(2+). Residues His168 and Asp170 each contribute to the Zn(2+) site. 4 residues coordinate Ca(2+): Asp175, Gly176, Gly178, and Asn180. Residue His183 coordinates Zn(2+). Gly190, Gly192, and Asp194 together coordinate Ca(2+). Residue His196 participates in Zn(2+) binding. The Ca(2+) site is built by Asp198, Asp199, and Glu201. Residue His218 coordinates Zn(2+). The active site involves Glu219. Zn(2+)-binding residues include His222 and His228. Thr274 carries the post-translational modification Phosphothreonine. Hemopexin repeat units lie at residues 275-324 (PEVC…WPQL), 325-371 (PNGL…FGFP), 374-422 (VKSI…FPGI), and 423-466 (GNKV…WFNC). A disulfide bridge connects residues Cys278 and Cys466. Ca(2+)-binding residues include Asp285 and Gln329. A Phosphotyrosine; by PKDCC modification is found at Tyr360. Positions 378 and 427 each coordinate Ca(2+).

It belongs to the peptidase M10A family. The cofactor is Ca(2+). Zn(2+) is required as a cofactor. Post-translationally, tyrosine phosphorylated in platelets by PKDCC/VLK.

The protein localises to the secreted. Its subcellular location is the extracellular space. It localises to the extracellular matrix. It catalyses the reaction Cleavage of the triple helix of collagen at about three-quarters of the length of the molecule from the N-terminus, at 775-Gly-|-Ile-776 in the alpha1(I) chain. Cleaves synthetic substrates and alpha-macroglobulins at bonds where P1' is a hydrophobic residue.. With respect to regulation, can be activated without removal of the activation peptide. In terms of biological role, cleaves collagens of types I, II, and III at one site in the helical domain. Also cleaves collagens of types VII and X. This chain is Interstitial collagenase (MMP1), found in Bos taurus (Bovine).